A 425-amino-acid polypeptide reads, in one-letter code: uncharacterized protein (425 aa).

In terms of domain architecture, TRAM spans 1-57; that stretch reads MKDKPLKLTVEKLVYGGYGFSRLNGKAVFVRFASPKELVEAKVVKEKKDYTEAVVTK. [4Fe-4S] cluster is bound by residues C70, C76, C79, and C153. 3 residues coordinate S-adenosyl-L-methionine: Q260, D308, and D354. C381 functions as the Nucleophile in the catalytic mechanism.

It belongs to the class I-like SAM-binding methyltransferase superfamily. RNA M5U methyltransferase family.

This is an uncharacterized protein from Aquifex aeolicus (strain VF5).